The following is a 437-amino-acid chain: Adenylosuccinate synthetase 1 (437 aa).

Residues 13 to 19 (GDEGKGK) and 41 to 43 (GHT) contribute to the GTP site. Catalysis depends on Asp-14, which acts as the Proton acceptor. 2 residues coordinate Mg(2+): Asp-14 and Gly-41. Residues 14-17 (DEGK), 39-42 (NAGH), Thr-130, Arg-144, Gln-225, Thr-240, and Arg-310 contribute to the IMP site. The active-site Proton donor is the His-42. 306–312 (ATTGRLR) provides a ligand contact to substrate. GTP-binding positions include Arg-312, 338 to 340 (KLD), and 421 to 423 (STG).

It belongs to the adenylosuccinate synthetase family. As to quaternary structure, homodimer. Mg(2+) serves as cofactor.

It is found in the cytoplasm. The enzyme catalyses IMP + L-aspartate + GTP = N(6)-(1,2-dicarboxyethyl)-AMP + GDP + phosphate + 2 H(+). The protein operates within purine metabolism; AMP biosynthesis via de novo pathway; AMP from IMP: step 1/2. Functionally, plays an important role in the de novo pathway of purine nucleotide biosynthesis. Catalyzes the first committed step in the biosynthesis of AMP from IMP. This chain is Adenylosuccinate synthetase 1, found in Pseudoalteromonas translucida (strain TAC 125).